The following is a 457-amino-acid chain: tRNA modification GTPase MnmE (457 aa).

Residues Arg-25, Glu-87, and Arg-126 each coordinate (6S)-5-formyl-5,6,7,8-tetrahydrofolate. The 155-residue stretch at 223-377 folds into the TrmE-type G domain; that stretch reads GISTAIIGRP…IEERINQLFF (155 aa). K(+) is bound at residue Asn-233. GTP-binding positions include 233–238, 252–258, and 277–280; these read NVGKSS, TDIEGTT, and DTAG. Ser-237 contacts Mg(2+). Positions 252, 254, and 257 each coordinate K(+). Thr-258 is a binding site for Mg(2+). Residue Lys-457 coordinates (6S)-5-formyl-5,6,7,8-tetrahydrofolate.

Belongs to the TRAFAC class TrmE-Era-EngA-EngB-Septin-like GTPase superfamily. TrmE GTPase family. In terms of assembly, homodimer. Heterotetramer of two MnmE and two MnmG subunits. K(+) is required as a cofactor.

The protein localises to the cytoplasm. Exhibits a very high intrinsic GTPase hydrolysis rate. Involved in the addition of a carboxymethylaminomethyl (cmnm) group at the wobble position (U34) of certain tRNAs, forming tRNA-cmnm(5)s(2)U34. The polypeptide is tRNA modification GTPase MnmE (Streptococcus sanguinis (strain SK36)).